A 329-amino-acid chain; its full sequence is 4-hydroxythreonine-4-phosphate dehydrogenase (329 aa).

Positions 136 and 137 each coordinate substrate. 3 residues coordinate a divalent metal cation: histidine 166, histidine 211, and histidine 266. Substrate contacts are provided by lysine 274, asparagine 283, and arginine 292.

Belongs to the PdxA family. In terms of assembly, homodimer. The cofactor is Zn(2+). Requires Mg(2+) as cofactor. Co(2+) is required as a cofactor.

It localises to the cytoplasm. The catalysed reaction is 4-(phosphooxy)-L-threonine + NAD(+) = 3-amino-2-oxopropyl phosphate + CO2 + NADH. It functions in the pathway cofactor biosynthesis; pyridoxine 5'-phosphate biosynthesis; pyridoxine 5'-phosphate from D-erythrose 4-phosphate: step 4/5. Catalyzes the NAD(P)-dependent oxidation of 4-(phosphooxy)-L-threonine (HTP) into 2-amino-3-oxo-4-(phosphooxy)butyric acid which spontaneously decarboxylates to form 3-amino-2-oxopropyl phosphate (AHAP). This chain is 4-hydroxythreonine-4-phosphate dehydrogenase, found in Escherichia fergusonii (strain ATCC 35469 / DSM 13698 / CCUG 18766 / IAM 14443 / JCM 21226 / LMG 7866 / NBRC 102419 / NCTC 12128 / CDC 0568-73).